A 200-amino-acid chain; its full sequence is 3-isopropylmalate dehydratase small subunit (200 aa).

The protein belongs to the LeuD family. LeuD type 1 subfamily. Heterodimer of LeuC and LeuD.

The catalysed reaction is (2R,3S)-3-isopropylmalate = (2S)-2-isopropylmalate. It participates in amino-acid biosynthesis; L-leucine biosynthesis; L-leucine from 3-methyl-2-oxobutanoate: step 2/4. Catalyzes the isomerization between 2-isopropylmalate and 3-isopropylmalate, via the formation of 2-isopropylmaleate. This is 3-isopropylmalate dehydratase small subunit (leuD) from Synechocystis sp. (strain ATCC 27184 / PCC 6803 / Kazusa).